A 71-amino-acid polypeptide reads, in one-letter code: DNA-directed RNA polymerase subunit omega (71 aa).

The protein belongs to the RNA polymerase subunit omega family. The RNAP catalytic core consists of 2 alpha, 1 beta, 1 beta' and 1 omega subunit. When a sigma factor is associated with the core the holoenzyme is formed, which can initiate transcription.

The enzyme catalyses RNA(n) + a ribonucleoside 5'-triphosphate = RNA(n+1) + diphosphate. Promotes RNA polymerase assembly. Latches the N- and C-terminal regions of the beta' subunit thereby facilitating its interaction with the beta and alpha subunits. This is DNA-directed RNA polymerase subunit omega from Azoarcus sp. (strain BH72).